The sequence spans 24 residues: Fraternine (24 aa).

A disulfide bond links Cys-11 and Cys-24. Cys-24 carries the cysteine amide modification.

In terms of tissue distribution, expressed by the venom gland.

The protein resides in the secreted. Functionally, wasp venom peptide that acts as a potent mast cell degranulating peptide without hemolytic activity. Shows neuroprotective effect, since it prevents the death of dopaminergic neurons of the brain substantia nigra region and recovers motor deficit in a 6-hydroxydopamine (6-OHDA)-induced murine model of Parkinson disease. The sequence is that of Fraternine from Parachartergus fraternus (Artistic wasp).